A 121-amino-acid polypeptide reads, in one-letter code: Large ribosomal subunit protein uL18 (121 aa).

This sequence belongs to the universal ribosomal protein uL18 family. As to quaternary structure, part of the 50S ribosomal subunit; part of the 5S rRNA/L5/L18/L25 subcomplex. Contacts the 5S and 23S rRNAs.

Its function is as follows. This is one of the proteins that bind and probably mediate the attachment of the 5S RNA into the large ribosomal subunit, where it forms part of the central protuberance. This is Large ribosomal subunit protein uL18 from Paraburkholderia xenovorans (strain LB400).